Reading from the N-terminus, the 358-residue chain is Magnesium-protoporphyrin IX monomethyl ester [oxidative] cyclase (358 aa).

It belongs to the AcsF family. Fe cation is required as a cofactor.

The enzyme catalyses Mg-protoporphyrin IX 13-monomethyl ester + 3 NADPH + 3 O2 + 2 H(+) = 3,8-divinyl protochlorophyllide a + 3 NADP(+) + 5 H2O. Its pathway is porphyrin-containing compound metabolism; chlorophyll biosynthesis (light-independent). Its function is as follows. Catalyzes the formation of the isocyclic ring in chlorophyll biosynthesis. Mediates the cyclase reaction, which results in the formation of divinylprotochlorophyllide (Pchlide) characteristic of all chlorophylls from magnesium-protoporphyrin IX 13-monomethyl ester (MgPMME). The chain is Magnesium-protoporphyrin IX monomethyl ester [oxidative] cyclase from Synechococcus elongatus (strain ATCC 33912 / PCC 7942 / FACHB-805) (Anacystis nidulans R2).